Consider the following 287-residue polypeptide: MPELPEVETVCRGLNRLTLEQTIGGGEVLLDRSLAYPVSVEDFQKQITGCRLVGWQRRGKYLLGELRSNQAPGPAGWLGCHLRMTGQLLWTERDQQRPRHTRVVLHFEGGWELRFVDTRTFGKVWLLPGDRPWAEVMTGLGQLGPEPFGADFTAEYLYEKLKSSRRPLKNALLDQRLVAGLGNIYADEVLFFCGFHPTMASNQVSLQDCELIHQQIQATLTAAIEAGGTSFSDYRQVTGINGNYGGMAQVYGREGEPCRHCGTVIAKIKLGGRSAHFCPQCQPKLER.

Pro-2 functions as the Schiff-base intermediate with DNA in the catalytic mechanism. The active-site Proton donor is Glu-3. Lys-60 acts as the Proton donor; for beta-elimination activity in catalysis. His-100 and Arg-119 together coordinate DNA. The FPG-type zinc finger occupies 249–283 (QVYGREGEPCRHCGTVIAKIKLGGRSAHFCPQCQP). Residue Arg-273 is the Proton donor; for delta-elimination activity of the active site.

It belongs to the FPG family. Monomer. The cofactor is Zn(2+).

It carries out the reaction Hydrolysis of DNA containing ring-opened 7-methylguanine residues, releasing 2,6-diamino-4-hydroxy-5-(N-methyl)formamidopyrimidine.. The catalysed reaction is 2'-deoxyribonucleotide-(2'-deoxyribose 5'-phosphate)-2'-deoxyribonucleotide-DNA = a 3'-end 2'-deoxyribonucleotide-(2,3-dehydro-2,3-deoxyribose 5'-phosphate)-DNA + a 5'-end 5'-phospho-2'-deoxyribonucleoside-DNA + H(+). Involved in base excision repair of DNA damaged by oxidation or by mutagenic agents. Acts as a DNA glycosylase that recognizes and removes damaged bases. Has a preference for oxidized purines, such as 7,8-dihydro-8-oxoguanine (8-oxoG). Has AP (apurinic/apyrimidinic) lyase activity and introduces nicks in the DNA strand. Cleaves the DNA backbone by beta-delta elimination to generate a single-strand break at the site of the removed base with both 3'- and 5'-phosphates. This is Formamidopyrimidine-DNA glycosylase (mutM) from Synechocystis sp. (strain ATCC 27184 / PCC 6803 / Kazusa).